A 623-amino-acid chain; its full sequence is mRNA-capping enzyme (623 aa).

Residues 13-224 (MGLPDRWLHC…IDNGRPSTSQ (212 aa)) form a TPase region. The Tyrosine-protein phosphatase domain occupies 44–196 (YDNQIAERRY…YDPTEDDKIL (153 aa)). C136 acts as the Phosphocysteine intermediate in catalysis. A compositionally biased stretch (polar residues) spans 213-229 (TQIDNGRPSTSQQIPAT). The tract at residues 213-243 (TQIDNGRPSTSQQIPATNGNNNQNGNQLSGG) is disordered. A compositionally biased stretch (low complexity) spans 230–239 (NGNNNQNGNQ). Residues 241-585 (SGGGDNSKLF…NPVTETYLIE (345 aa)) are GTase. The N6-GMP-lysine intermediate role is filled by K311. Residues R316, R331, 357 to 359 (DTE), 477 to 479 (KWK), and 553 to 558 (RERTDK) each bind GTP. The segment at 603-623 (HHQIHQQQLHEGEPEARRQKL) is disordered. Residues 610-623 (QLHEGEPEARRQKL) are compositionally biased toward basic and acidic residues.

In the N-terminal section; belongs to the non-receptor class of the protein-tyrosine phosphatase family. This sequence in the C-terminal section; belongs to the eukaryotic GTase family.

Its subcellular location is the nucleus. The catalysed reaction is a 5'-end triphospho-ribonucleoside in mRNA + H2O = a 5'-end diphospho-ribonucleoside in mRNA + phosphate + H(+). It catalyses the reaction a 5'-end diphospho-ribonucleoside in mRNA + GTP + H(+) = a 5'-end (5'-triphosphoguanosine)-ribonucleoside in mRNA + diphosphate. RNA triphosphatase activity is inhibited by magnesium. Bifunctional mRNA-capping enzyme exhibiting RNA 5'-triphosphate monophosphatase activity in the N-terminal part and mRNA guanylyltransferase activity in the C-terminal part. Catalyzes the first two steps of cap formation: by removing the gamma-phosphate from the 5'-triphosphate end of nascent mRNA to yield a diphosphate end, and by transferring the GMP moiety of GTP to the 5'-diphosphate terminus via a covalent enzyme-GMP reaction intermediate. The sequence is that of mRNA-capping enzyme (cel-1) from Caenorhabditis elegans.